Reading from the N-terminus, the 116-residue chain is Large ribosomal subunit protein uL18 (116 aa).

The protein belongs to the universal ribosomal protein uL18 family. In terms of assembly, part of the 50S ribosomal subunit; part of the 5S rRNA/L5/L18/L25 subcomplex. Contacts the 5S and 23S rRNAs.

Its function is as follows. This is one of the proteins that bind and probably mediate the attachment of the 5S RNA into the large ribosomal subunit, where it forms part of the central protuberance. The chain is Large ribosomal subunit protein uL18 from Pseudomonas putida (strain GB-1).